Here is a 208-residue protein sequence, read N- to C-terminus: Ribosome maturation factor RimP (208 aa).

The protein belongs to the RimP family.

It localises to the cytoplasm. Its function is as follows. Required for maturation of 30S ribosomal subunits. The sequence is that of Ribosome maturation factor RimP from Bartonella tribocorum (strain CIP 105476 / IBS 506).